The following is a 571-amino-acid chain: uncharacterized protein (571 aa).

11 helical membrane passes run 5-27 (VILN…GYLV), 34-56 (TFVL…LNIT), 61-79 (IGSL…QGGA), 92-114 (LLAS…AWIF), 161-183 (TVGY…ATIF), 391-408 (FIFF…GLIS), 412-434 (FGIS…FGWI), 455-474 (LGLA…QAIT), 484-506 (FFLG…YYLL), 513-532 (VLLA…AALL), and 547-569 (SYAL…VTII).

It belongs to the AAE transporter (TC 2.A.81) family.

It localises to the cell membrane. This is an uncharacterized protein from Francisella tularensis subsp. tularensis (strain SCHU S4 / Schu 4).